Consider the following 328-residue polypeptide: Glycerol-3-phosphate dehydrogenase [NAD(P)+] (328 aa).

Residues W15, R35, R36, and K105 each contribute to the NADPH site. Residues K105 and G131 each coordinate sn-glycerol 3-phosphate. Position 135 (A135) interacts with NADPH. 5 residues coordinate sn-glycerol 3-phosphate: K186, D239, S249, R250, and N251. Residue K186 is the Proton acceptor of the active site. R250 contributes to the NADPH binding site. The NADPH site is built by V270 and E272.

This sequence belongs to the NAD-dependent glycerol-3-phosphate dehydrogenase family.

The protein localises to the cytoplasm. It catalyses the reaction sn-glycerol 3-phosphate + NAD(+) = dihydroxyacetone phosphate + NADH + H(+). It carries out the reaction sn-glycerol 3-phosphate + NADP(+) = dihydroxyacetone phosphate + NADPH + H(+). It functions in the pathway membrane lipid metabolism; glycerophospholipid metabolism. Functionally, catalyzes the reduction of the glycolytic intermediate dihydroxyacetone phosphate (DHAP) to sn-glycerol 3-phosphate (G3P), the key precursor for phospholipid synthesis. The chain is Glycerol-3-phosphate dehydrogenase [NAD(P)+] from Deinococcus radiodurans (strain ATCC 13939 / DSM 20539 / JCM 16871 / CCUG 27074 / LMG 4051 / NBRC 15346 / NCIMB 9279 / VKM B-1422 / R1).